The sequence spans 332 residues: Methionyl-tRNA formyltransferase (332 aa).

124–127 (SLLP) provides a ligand contact to (6S)-5,6,7,8-tetrahydrofolate.

The protein belongs to the Fmt family.

It catalyses the reaction L-methionyl-tRNA(fMet) + (6R)-10-formyltetrahydrofolate = N-formyl-L-methionyl-tRNA(fMet) + (6S)-5,6,7,8-tetrahydrofolate + H(+). Attaches a formyl group to the free amino group of methionyl-tRNA(fMet). The formyl group appears to play a dual role in the initiator identity of N-formylmethionyl-tRNA by promoting its recognition by IF2 and preventing the misappropriation of this tRNA by the elongation apparatus. This Polynucleobacter asymbioticus (strain DSM 18221 / CIP 109841 / QLW-P1DMWA-1) (Polynucleobacter necessarius subsp. asymbioticus) protein is Methionyl-tRNA formyltransferase.